A 389-amino-acid chain; its full sequence is MVSRPHGGRLVDRTVSDKRRERLREEARELPAIRLTAGLAADVANIAHGVYSPLEGFMLQEDYLSVLDEMRLSNDLPWTIPIILDVDPGEIAGVREGDDIALVYNGKPIALMRVEEIYGWDRKEYAAKVFKTTDPAHPGVAKTMKRKELLIGGPIDLIEDPPEPFERYRLWPKETRVLFKARGWKTIAAFQTRNVPHLGHEYVQKAALTFTDGLFVNPLVGWKKPGDYRDEVIVEAYQALIKHYFPVESVVFSVLRMEMRYAGPREAIHHAIVRKNFGATHFIVGRDHAGVGNYYGPYEAWELFREFPDLGITPLFVREAFYCRKCGQMVNEKICPHPEEYRVRISGTKLRRMLLEGQRPPEYMMRPEVVDVVLKHPNPFIEGDEAFQE.

The protein belongs to the sulfate adenylyltransferase family.

The catalysed reaction is sulfate + ATP + H(+) = adenosine 5'-phosphosulfate + diphosphate. The protein operates within sulfur metabolism; hydrogen sulfide biosynthesis; sulfite from sulfate: step 1/3. The protein is Sulfate adenylyltransferase of Hyperthermus butylicus (strain DSM 5456 / JCM 9403 / PLM1-5).